A 192-amino-acid chain; its full sequence is Capsid protein (192 aa).

Residues Met1–Pro30 are disordered. Positions Pro12–Pro30 are enriched in polar residues.

The protein belongs to the tymoviruses capsid protein family.

The protein resides in the virion. In terms of biological role, self-assembles to form a T=3 icosahedral capsid composed of 180 copies of the capsid protein. The capsid encapsulates the single-stranded RNA genome. This chain is Capsid protein, found in Ononis.